The sequence spans 375 residues: Queuine tRNA-ribosyltransferase (375 aa).

Asp-89 serves as the catalytic Proton acceptor. Residues 89 to 93 (DSGGF), Asp-143, Gln-187, and Gly-214 contribute to the substrate site. The interval 245-251 (GVGKPED) is RNA binding. Residue Asp-264 is the Nucleophile of the active site. The interval 269–273 (TRNAR) is RNA binding; important for wobble base 34 recognition. Zn(2+) contacts are provided by Cys-302, Cys-304, Cys-307, and His-333.

Belongs to the queuine tRNA-ribosyltransferase family. Homodimer. Within each dimer, one monomer is responsible for RNA recognition and catalysis, while the other monomer binds to the replacement base PreQ1. The cofactor is Zn(2+).

It catalyses the reaction 7-aminomethyl-7-carbaguanine + guanosine(34) in tRNA = 7-aminomethyl-7-carbaguanosine(34) in tRNA + guanine. It functions in the pathway tRNA modification; tRNA-queuosine biosynthesis. Catalyzes the base-exchange of a guanine (G) residue with the queuine precursor 7-aminomethyl-7-deazaguanine (PreQ1) at position 34 (anticodon wobble position) in tRNAs with GU(N) anticodons (tRNA-Asp, -Asn, -His and -Tyr). Catalysis occurs through a double-displacement mechanism. The nucleophile active site attacks the C1' of nucleotide 34 to detach the guanine base from the RNA, forming a covalent enzyme-RNA intermediate. The proton acceptor active site deprotonates the incoming PreQ1, allowing a nucleophilic attack on the C1' of the ribose to form the product. After dissociation, two additional enzymatic reactions on the tRNA convert PreQ1 to queuine (Q), resulting in the hypermodified nucleoside queuosine (7-(((4,5-cis-dihydroxy-2-cyclopenten-1-yl)amino)methyl)-7-deazaguanosine). The protein is Queuine tRNA-ribosyltransferase of Klebsiella pneumoniae subsp. pneumoniae (strain ATCC 700721 / MGH 78578).